Consider the following 218-residue polypeptide: Mitochondrial fission factor (218 aa).

Residues 1–198 (MAEISRIQYE…ENKERAKREM (198 aa)) lie on the Cytoplasmic side of the membrane. Thr-89 carries the phosphothreonine modification. Residues Ser-129, Ser-131, Ser-146, and Ser-171 each carry the phosphoserine modification. Positions 167–198 (VDAASLRRQIIKLNRRLQLLEEENKERAKREM) form a coiled coil. A helical; Anchor for type IV membrane protein transmembrane segment spans residues 199–216 (VMYSITVAFWLLNSWLWF). Topologically, residues 217–218 (RR) are mitochondrial intermembrane.

This sequence belongs to the Tango11 family. Homodimer. Interacts with DNM1L. Interacts with C11orf65/MFI; the interaction inhibits MFF interaction with DNM1L.

It is found in the mitochondrion outer membrane. It localises to the peroxisome. The protein resides in the cytoplasmic vesicle. The protein localises to the secretory vesicle. Its subcellular location is the synaptic vesicle. Plays a role in mitochondrial and peroxisomal fission. Promotes the recruitment and association of the fission mediator dynamin-related protein 1 (DNM1L) to the mitochondrial surface. May be involved in regulation of synaptic vesicle membrane dynamics by recruitment of DNM1L to clathrin-containing vesicles. In Pongo abelii (Sumatran orangutan), this protein is Mitochondrial fission factor (MFF).